We begin with the raw amino-acid sequence, 550 residues long: Hydroxylamine reductase (550 aa).

[2Fe-2S] cluster is bound by residues C3, C6, C18, and C25. The hybrid [4Fe-2O-2S] cluster site is built by H249, E273, C317, C405, C433, C458, E492, and K494. C405 bears the Cysteine persulfide mark.

Belongs to the HCP family. Requires [2Fe-2S] cluster as cofactor. Hybrid [4Fe-2O-2S] cluster is required as a cofactor.

The protein resides in the cytoplasm. The catalysed reaction is A + NH4(+) + H2O = hydroxylamine + AH2 + H(+). Its function is as follows. Catalyzes the reduction of hydroxylamine to form NH(3) and H(2)O. This Salmonella choleraesuis (strain SC-B67) protein is Hydroxylamine reductase.